Here is a 99-residue protein sequence, read N- to C-terminus: Orphan antixoxin protein TacA (99 aa).

It belongs to the TacA antitoxin family.

Functionally, putative antitoxin component of a toxin-antitoxin (TA) system; its cognate toxin (usually a tRNA acetylase) is unknown. This chain is Orphan antixoxin protein TacA, found in Haemophilus influenzae (strain ATCC 51907 / DSM 11121 / KW20 / Rd).